Reading from the N-terminus, the 291-residue chain is Phycobilisome 32.1 kDa linker polypeptide, phycocyanin-associated, rod 1 (291 aa).

In terms of domain architecture, PBS-linker spans 2–179; that stretch reads AITTAASRLG…LYRGYANSDR (178 aa). Residues 236–288 form the CpcD-like domain; the sequence is SKLFRVEITAISAPGYPKVRRSNKAVIVPFEQLNQTLQQINRLGGKVASITPA.

It belongs to the phycobilisome linker protein family. In terms of assembly, part of 2 PBS rod complexes, the conventional CpcG-PBS rod and a photosystem I-specific CpcL-PBS rod, both of which include ferredoxin--NADP reductase (petH). CpcG-PBS has on average 3 stacked phycocyanin hexamers (PC, CpcA and CpcB). Linker CpcG connects the PC stack to the thylakoid, the hexamers are linked by 1 copy of CpcC1, 1 copy of CpcC2 and the stack is terminated by a single copy of CpcD. The CpcL-PBS has on average 5 stacked phycocyanin hexamers (PC, CpcA and CpcB). Linker CpcL connects the PC stack to the thylakoid, the hexamers are linked by 1 copy of CpcC1, 3 copies of CpcC2 and the stack is terminated by a single copy of CpcD.

The protein localises to the cellular thylakoid membrane. In terms of biological role, rod linker protein, connecting hexameric phycocyanin (PC, made by cpcA and cpcB) rods in the phycobilisome (PBS). PC is the major phycobiliprotein in PBS rods. Linker polypeptides determine the state of aggregation and the location of the disk-shaped phycobiliprotein units within the phycobilisome and modulate their spectroscopic properties in order to mediate a directed and optimal energy transfer. In Synechocystis sp. (strain ATCC 27184 / PCC 6803 / Kazusa), this protein is Phycobilisome 32.1 kDa linker polypeptide, phycocyanin-associated, rod 1 (cpcC1).